We begin with the raw amino-acid sequence, 535 residues long: Succinate-semialdehyde dehydrogenase, mitochondrial (535 aa).

Residues 1–47 (MATCIWLRSCGARRLGWTFPGCRLRPRAGGLVPASGPAPGPAQLRCY) constitute a mitochondrion transit peptide. Lys-126 carries the N6-acetyllysine; alternate modification. An N6-succinyllysine; alternate modification is found at Lys-126. Lys-135 and Lys-184 each carry N6-succinyllysine. NAD(+)-binding positions include Arg-213 and 228–231 (KPAE). Arg-213 contacts substrate. Lys-265 bears the N6-acetyllysine; alternate mark. An N6-succinyllysine; alternate modification is found at Lys-265. 284 to 289 (GSTTTG) is an NAD(+) binding site. The active-site Proton acceptor is Glu-306. Residue Arg-334 participates in substrate binding. The active-site Nucleophile is Cys-340. Cys-340 and Cys-342 form a disulfide bridge. An N6-acetyllysine modification is found at Lys-365. An N6-succinyllysine modification is found at Lys-402. Lys-411 bears the N6-acetyllysine mark. Substrate is bound at residue Ser-498. Residue Ser-499 is modified to Phosphoserine.

The protein belongs to the aldehyde dehydrogenase family. As to quaternary structure, homotetramer.

It localises to the mitochondrion. It carries out the reaction succinate semialdehyde + NAD(+) + H2O = succinate + NADH + 2 H(+). It participates in amino-acid degradation; 4-aminobutanoate degradation. Its activity is regulated as follows. Redox-regulated. Inhibited under oxydizing conditions. Functionally, catalyzes one step in the degradation of the inhibitory neurotransmitter gamma-aminobutyric acid (GABA). The sequence is that of Succinate-semialdehyde dehydrogenase, mitochondrial (ALDH5A1) from Pan paniscus (Pygmy chimpanzee).